Consider the following 53-residue polypeptide: uncharacterized protein (53 aa).

Residues 1 to 19 (MKLLTILILFYSFFMNLQA) form the signal peptide.

This is an uncharacterized protein from Autographa californica nuclear polyhedrosis virus (AcMNPV).